We begin with the raw amino-acid sequence, 300 residues long: Ribosomal protein L11 methyltransferase (300 aa).

Residues Thr-144, Gly-165, Asp-187, and Asn-235 each contribute to the S-adenosyl-L-methionine site.

The protein belongs to the methyltransferase superfamily. PrmA family.

It is found in the cytoplasm. It carries out the reaction L-lysyl-[protein] + 3 S-adenosyl-L-methionine = N(6),N(6),N(6)-trimethyl-L-lysyl-[protein] + 3 S-adenosyl-L-homocysteine + 3 H(+). In terms of biological role, methylates ribosomal protein L11. In Prochlorococcus marinus (strain MIT 9515), this protein is Ribosomal protein L11 methyltransferase.